The primary structure comprises 402 residues: Putative FBD-associated F-box protein At5g56690 (402 aa).

In terms of domain architecture, F-box spans Met-1 to Asp-47. The FBD domain occupies Ser-349–His-401.

The polypeptide is Putative FBD-associated F-box protein At5g56690 (Arabidopsis thaliana (Mouse-ear cress)).